The following is a 228-amino-acid chain: DNA repair and recombination protein RadB (228 aa).

Belongs to the eukaryotic RecA-like protein family. RadB subfamily.

Functionally, involved in DNA repair and in homologous recombination. May regulate the cleavage reactions of the branch-structured DNA. Has a very weak ATPase activity that is not stimulated by DNA. Binds DNA but does not promote DNA strands exchange. This chain is DNA repair and recombination protein RadB, found in Thermococcus sibiricus (strain DSM 12597 / MM 739).